The chain runs to 404 residues: Serine/threonine transporter SstT (404 aa).

9 helical membrane passes run 12 to 32, 53 to 73, 81 to 101, 140 to 160, 177 to 197, 216 to 236, 287 to 307, 329 to 349, and 356 to 376; these read GGNLVLRIAIGLVLGACLALV, AIAPILVFVLVLSAIANKEVG, ILVMYVLGTFVAALTAVVLSF, ALANANFIGILAWAIGLGIAL, AVSFVVKVVIAFAPIGVFGLV, LGVLLGAMVIVAFVLNPLIVF, VAIPLGATINMAGAAITVTVL, IVASVCACGASGVAGGSLLLI, and FNIPNDIAAQVIGVGFIIGVI.

It belongs to the dicarboxylate/amino acid:cation symporter (DAACS) (TC 2.A.23) family.

Its subcellular location is the cell inner membrane. It catalyses the reaction L-serine(in) + Na(+)(in) = L-serine(out) + Na(+)(out). The catalysed reaction is L-threonine(in) + Na(+)(in) = L-threonine(out) + Na(+)(out). Functionally, involved in the import of serine and threonine into the cell, with the concomitant import of sodium (symport system). The protein is Serine/threonine transporter SstT of Actinobacillus pleuropneumoniae serotype 7 (strain AP76).